A 65-amino-acid chain; its full sequence is KEGYPMGRDGCKISCVINNSFCKVECQAKWRQSDGYCYFWGLSCYCTNLPEDAQVWDSSTNKCGG.

One can recognise an LCN-type CS-alpha/beta domain in the interval 1–64 (KEGYPMGRDG…VWDSSTNKCG (64 aa)). 4 disulfides stabilise this stretch: Cys11–Cys63, Cys15–Cys37, Cys22–Cys44, and Cys26–Cys46.

It belongs to the long (4 C-C) scorpion toxin superfamily. Sodium channel inhibitor family. Beta subfamily. In terms of tissue distribution, expressed by the venom gland.

The protein resides in the secreted. Functionally, beta toxins bind voltage-independently at site-4 of sodium channels (Nav) and shift the voltage of activation toward more negative potentials thereby affecting sodium channel activation and promoting spontaneous and repetitive firing. The polypeptide is Putative beta-neurotoxin RjAa8 (Rhopalurus junceus (Caribbean blue scorpion)).